The following is a 522-amino-acid chain: 2-isopropylmalate synthase (522 aa).

The 263-residue stretch at 5–267 folds into the Pyruvate carboxyltransferase domain; it reads VIIFDTTLRD…ETGINAKEIH (263 aa). Asp-14, His-202, His-204, and Asn-238 together coordinate Mn(2+). The regulatory domain stretch occupies residues 392–522; it reads QLQQLVVQSD…MQKNRELGGV (131 aa).

The protein belongs to the alpha-IPM synthase/homocitrate synthase family. LeuA type 1 subfamily. In terms of assembly, homodimer. The cofactor is Mn(2+).

The protein resides in the cytoplasm. It catalyses the reaction 3-methyl-2-oxobutanoate + acetyl-CoA + H2O = (2S)-2-isopropylmalate + CoA + H(+). The protein operates within amino-acid biosynthesis; L-leucine biosynthesis; L-leucine from 3-methyl-2-oxobutanoate: step 1/4. Its function is as follows. Catalyzes the condensation of the acetyl group of acetyl-CoA with 3-methyl-2-oxobutanoate (2-ketoisovalerate) to form 3-carboxy-3-hydroxy-4-methylpentanoate (2-isopropylmalate). The chain is 2-isopropylmalate synthase from Shewanella baltica (strain OS185).